The primary structure comprises 672 residues: Glycine--tRNA ligase beta subunit (672 aa).

The protein belongs to the class-II aminoacyl-tRNA synthetase family. As to quaternary structure, tetramer of two alpha and two beta subunits.

The protein resides in the cytoplasm. It carries out the reaction tRNA(Gly) + glycine + ATP = glycyl-tRNA(Gly) + AMP + diphosphate. This Thermotoga petrophila (strain ATCC BAA-488 / DSM 13995 / JCM 10881 / RKU-1) protein is Glycine--tRNA ligase beta subunit.